Consider the following 539-residue polypeptide: CTP synthase (539 aa).

Positions 1-269 are amidoligase domain; that stretch reads MSATKYIFVT…DERVLSKLKL (269 aa). Ser-15 serves as a coordination point for CTP. Ser-15 contributes to the UTP binding site. 16–21 serves as a coordination point for ATP; that stretch reads SLGKGI. Tyr-56 lines the L-glutamine pocket. Asp-73 serves as a coordination point for ATP. Asp-73 and Glu-143 together coordinate Mg(2+). CTP-binding positions include 150-152, 190-195, and Lys-226; these read DIE and KTKPTQ. UTP-binding positions include 190–195 and Lys-226; that span reads KTKPTQ. The Glutamine amidotransferase type-1 domain maps to 295-537; sequence NIALVGKYVE…VKAANDFAKG (243 aa). Gly-357 contributes to the L-glutamine binding site. Cys-384 serves as the catalytic Nucleophile; for glutamine hydrolysis. L-glutamine is bound by residues 385-388, Glu-408, and Arg-465; that span reads LGMQ. Catalysis depends on residues His-510 and Glu-512.

This sequence belongs to the CTP synthase family. As to quaternary structure, homotetramer.

The catalysed reaction is UTP + L-glutamine + ATP + H2O = CTP + L-glutamate + ADP + phosphate + 2 H(+). It catalyses the reaction L-glutamine + H2O = L-glutamate + NH4(+). It carries out the reaction UTP + NH4(+) + ATP = CTP + ADP + phosphate + 2 H(+). It participates in pyrimidine metabolism; CTP biosynthesis via de novo pathway; CTP from UDP: step 2/2. Its activity is regulated as follows. Allosterically activated by GTP, when glutamine is the substrate; GTP has no effect on the reaction when ammonia is the substrate. The allosteric effector GTP functions by stabilizing the protein conformation that binds the tetrahedral intermediate(s) formed during glutamine hydrolysis. Inhibited by the product CTP, via allosteric rather than competitive inhibition. Catalyzes the ATP-dependent amination of UTP to CTP with either L-glutamine or ammonia as the source of nitrogen. Regulates intracellular CTP levels through interactions with the four ribonucleotide triphosphates. This chain is CTP synthase, found in Cytophaga hutchinsonii (strain ATCC 33406 / DSM 1761 / CIP 103989 / NBRC 15051 / NCIMB 9469 / D465).